A 111-amino-acid polypeptide reads, in one-letter code: uncharacterized protein (111 aa).

Positions 1 to 85 (MTGLMKAFQK…TSSREDEQKL (85 aa)) are disordered. Polar residues predominate over residues 11-23 (LSPTKRQYAEITQ). Residues 24-42 (SNSSISSSSSGSKYNDSSS) are compositionally biased toward low complexity. The span at 56-77 (ARASTSTQAQKPASSQQKGGTS) shows a compositional bias: polar residues.

This is an uncharacterized protein from Microplitis demolitor (Parasitoid wasp).